An 838-amino-acid chain; its full sequence is Leucine--tRNA ligase (838 aa).

The short motif at 36-46 (PYPSGKIHMGH) is the 'HIGH' region element. A 'KMSKS' region motif is present at residues 611–615 (KMSKS). K614 contributes to the ATP binding site.

The protein belongs to the class-I aminoacyl-tRNA synthetase family.

The protein resides in the cytoplasm. It carries out the reaction tRNA(Leu) + L-leucine + ATP = L-leucyl-tRNA(Leu) + AMP + diphosphate. The sequence is that of Leucine--tRNA ligase from Wolbachia sp. subsp. Drosophila simulans (strain wRi).